Consider the following 192-residue polypeptide: uncharacterized protein (192 aa).

The Nudix hydrolase domain maps to 29-160; it reads QRQAAVLIPV…PLDVYRRGNS (132 aa). The short motif at 67–89 is the Nudix box element; it reads GAVDSTDASLIAAALREAQEEVA. 2 residues coordinate Mg(2+): E83 and E87.

The protein belongs to the Nudix hydrolase family. PCD1 subfamily. The cofactor is Mn(2+). It depends on Mg(2+) as a cofactor.

Functionally, probably mediates the hydrolysis of some nucleoside diphosphate derivatives. This is an uncharacterized protein from Salmonella agona (strain SL483).